The following is a 275-amino-acid chain: Large ribosomal subunit protein uL2 (275 aa).

Residues 220 to 275 form a disordered region; sequence QTRGAAMNPVDHPHGGGEGKTGSSGHPVSPWGMPAKGFKTRKKKASDKLIISRRKK. A compositionally biased stretch (basic residues) spans 257–275; it reads FKTRKKKASDKLIISRRKK.

Belongs to the universal ribosomal protein uL2 family. In terms of assembly, part of the 50S ribosomal subunit. Forms a bridge to the 30S subunit in the 70S ribosome.

Its function is as follows. One of the primary rRNA binding proteins. Required for association of the 30S and 50S subunits to form the 70S ribosome, for tRNA binding and peptide bond formation. It has been suggested to have peptidyltransferase activity; this is somewhat controversial. Makes several contacts with the 16S rRNA in the 70S ribosome. This chain is Large ribosomal subunit protein uL2, found in Wolinella succinogenes (strain ATCC 29543 / DSM 1740 / CCUG 13145 / JCM 31913 / LMG 7466 / NCTC 11488 / FDC 602W) (Vibrio succinogenes).